A 310-amino-acid polypeptide reads, in one-letter code: Glycerol-3-phosphate dehydrogenase [NAD(P)+] (310 aa).

Positions 14, 34, 35, and 82 each coordinate NADPH. Residues K82 and G110 each contribute to the sn-glycerol 3-phosphate site. Residue S114 participates in NADPH binding. Residues K165, D218, S228, R229, and N230 each coordinate sn-glycerol 3-phosphate. The active-site Proton acceptor is K165. R229 lines the NADPH pocket. E255 contacts NADPH.

Belongs to the NAD-dependent glycerol-3-phosphate dehydrogenase family.

Its subcellular location is the cytoplasm. It carries out the reaction sn-glycerol 3-phosphate + NAD(+) = dihydroxyacetone phosphate + NADH + H(+). It catalyses the reaction sn-glycerol 3-phosphate + NADP(+) = dihydroxyacetone phosphate + NADPH + H(+). Its pathway is membrane lipid metabolism; glycerophospholipid metabolism. Functionally, catalyzes the reduction of the glycolytic intermediate dihydroxyacetone phosphate (DHAP) to sn-glycerol 3-phosphate (G3P), the key precursor for phospholipid synthesis. The chain is Glycerol-3-phosphate dehydrogenase [NAD(P)+] from Acaryochloris marina (strain MBIC 11017).